We begin with the raw amino-acid sequence, 446 residues long: Anthranilate N-benzoyltransferase protein 2 (446 aa).

Residues His164 and Asp393 each act as proton acceptor in the active site.

It belongs to the plant acyltransferase family. In terms of processing, N-terminus is blocked.

The enzyme catalyses anthranilate + benzoyl-CoA = N-benzoylanthranilate + CoA. It participates in phytoalexin biosynthesis; methoxydianthramide B biosynthesis. Catalyzes the formation of N-benzoylanthranilate, in the course of methoxydianthramide B, a phytoalexin. Phytoalexins are produced in response to infection by parasites, and are essential for the expression of disease resistance. The chain is Anthranilate N-benzoyltransferase protein 2 (HCBT2) from Dianthus caryophyllus (Carnation).